The following is a 476-amino-acid chain: H2.0-like homeobox protein (476 aa).

3 disordered regions span residues 121 to 170, 328 to 401, and 413 to 476; these read HLPQ…SSKD, WRHS…HQTT, and TASS…LAGL. Low complexity predominate over residues 158 to 168; sequence HHSGSAPAPSS. The homeobox DNA-binding region spans 273 to 332; the sequence is RSWSRAVFSNLQRKGLEKRFEIQKYVTKPDRKQLAAMLGLTDAQVKVWFQNRRMKWRHSK. 2 stretches are compositionally biased toward basic and acidic residues: residues 331-346 and 355-368; these read SKEA…EAGE and EGER…RSEG. The segment covering 369–379 has biased composition (acidic residues); sequence EAESESSDSES. The segment covering 386–397 has biased composition (basic and acidic residues); sequence DTERTEGTERSL. Over residues 413–446 the composition is skewed to low complexity; sequence TASSSASGSSFSFSSSSSLGSSNGSAGSASSLGS. Polar residues predominate over residues 455-464; sequence HQPSVTSGPQ.

It belongs to the H2.0 homeobox family.

The protein localises to the nucleus. Functionally, transcription factor required for TBX21/T-bet-dependent maturation of Th1 cells as well as maintenance of Th1-specific gene expression. Involved in embryogenesis and hematopoiesis. This is H2.0-like homeobox protein (Hlx) from Rattus norvegicus (Rat).